The chain runs to 114 residues: U10-agatoxin-Ao1a (114 aa).

An N-terminal signal peptide occupies residues 1-15 (MCVATCLCTFAYVLA). Residues 16–32 (KSDEGENLISKVEETQR) constitute a propeptide that is removed on maturation. Cystine bridges form between cysteine 34/cysteine 53, cysteine 41/cysteine 59, cysteine 50/cysteine 86, cysteine 52/cysteine 76, and cysteine 61/cysteine 74. The disordered stretch occupies residues 95–114 (GSQNPSLCKDPNPRRRRHGK).

This sequence belongs to the neurotoxin 04 (omega-agtx) family. 03 (type II/III omega-agtx) subfamily. In terms of tissue distribution, expressed by the venom gland.

It is found in the secreted. Its function is as follows. Inhibits voltage-gated calcium channels (Cav). In Agelena orientalis (Funnel-web spider), this protein is U10-agatoxin-Ao1a.